Consider the following 410-residue polypeptide: Benzene 1,2-dioxygenase system ferredoxin--NAD(+) reductase subunit (410 aa).

4–35 (HVAIIGNGVAGFTTAQALRAEGYEGRISLIGE) lines the FAD pocket. 145–173 (RLLIVGGGLIGCEVATTARKLGLSVTILE) is a binding site for NAD(+).

This sequence belongs to the bacterial ring-hydroxylating dioxygenase ferredoxin reductase family. In terms of assembly, this dioxygenase system consists of four proteins: the two subunits of the hydroxylase component (BedC1 and BedC2), a ferredoxin (BedB) and a ferredoxin reductase (BedA). It depends on FAD as a cofactor.

The enzyme catalyses 2 reduced [2Fe-2S]-[ferredoxin] + NAD(+) + H(+) = 2 oxidized [2Fe-2S]-[ferredoxin] + NADH. It participates in aromatic compound metabolism; benzene degradation; catechol from benzene: step 1/2. In terms of biological role, part of the electron transfer component of benzene 1,2-dioxygenase, transfers electrons from ferredoxin to NADH. The sequence is that of Benzene 1,2-dioxygenase system ferredoxin--NAD(+) reductase subunit (bedA) from Pseudomonas putida (Arthrobacter siderocapsulatus).